A 152-amino-acid chain; its full sequence is Superoxide dismutase [Cu-Zn] 2 (152 aa).

Residues His-45, His-47, and His-62 each coordinate Cu cation. Cys-56 and Cys-145 form a disulfide bridge. Residues His-62, His-70, His-79, and Asp-82 each coordinate Zn(2+). His-119 contributes to the Cu cation binding site.

It belongs to the Cu-Zn superoxide dismutase family. In terms of assembly, homodimer. The cofactor is Cu cation. Zn(2+) serves as cofactor.

The protein resides in the cytoplasm. It catalyses the reaction 2 superoxide + 2 H(+) = H2O2 + O2. Functionally, destroys radicals which are normally produced within the cells and which are toxic to biological systems. This chain is Superoxide dismutase [Cu-Zn] 2 (SODCC2), found in Oryza sativa subsp. japonica (Rice).